The primary structure comprises 277 residues: Shikimate dehydrogenase (NADP(+)) (277 aa).

Residues 17 to 19 and T64 each bind shikimate; that span reads SRS. K68 functions as the Proton acceptor in the catalytic mechanism. Shikimate is bound by residues N88 and D103. Residues 128–132 and L217 each bind NADP(+); that span reads GAGGS. Y219 provides a ligand contact to shikimate. Residue G240 participates in NADP(+) binding.

The protein belongs to the shikimate dehydrogenase family. Homodimer.

It catalyses the reaction shikimate + NADP(+) = 3-dehydroshikimate + NADPH + H(+). It functions in the pathway metabolic intermediate biosynthesis; chorismate biosynthesis; chorismate from D-erythrose 4-phosphate and phosphoenolpyruvate: step 4/7. Involved in the biosynthesis of the chorismate, which leads to the biosynthesis of aromatic amino acids. Catalyzes the reversible NADPH linked reduction of 3-dehydroshikimate (DHSA) to yield shikimate (SA). In Afipia carboxidovorans (strain ATCC 49405 / DSM 1227 / KCTC 32145 / OM5) (Oligotropha carboxidovorans), this protein is Shikimate dehydrogenase (NADP(+)).